The chain runs to 43 residues: Protein PsbN (43 aa).

The chain crosses the membrane as a helical span at residues 5 to 27 (TLIAIFISCSLVSFTGYALYTAF).

This sequence belongs to the PsbN family.

It localises to the plastid. It is found in the chloroplast thylakoid membrane. Functionally, may play a role in photosystem I and II biogenesis. This is Protein PsbN from Lopidium concinnum (Moss).